The chain runs to 256 residues: Thiazole synthase (256 aa).

K95 functions as the Schiff-base intermediate with DXP in the catalytic mechanism. Residues G156, 182–183 (AG), and 204–205 (NT) each bind 1-deoxy-D-xylulose 5-phosphate.

This sequence belongs to the ThiG family. In terms of assembly, homotetramer. Forms heterodimers with either ThiH or ThiS.

The protein resides in the cytoplasm. The enzyme catalyses [ThiS sulfur-carrier protein]-C-terminal-Gly-aminoethanethioate + 2-iminoacetate + 1-deoxy-D-xylulose 5-phosphate = [ThiS sulfur-carrier protein]-C-terminal Gly-Gly + 2-[(2R,5Z)-2-carboxy-4-methylthiazol-5(2H)-ylidene]ethyl phosphate + 2 H2O + H(+). The protein operates within cofactor biosynthesis; thiamine diphosphate biosynthesis. In terms of biological role, catalyzes the rearrangement of 1-deoxy-D-xylulose 5-phosphate (DXP) to produce the thiazole phosphate moiety of thiamine. Sulfur is provided by the thiocarboxylate moiety of the carrier protein ThiS. In vitro, sulfur can be provided by H(2)S. The polypeptide is Thiazole synthase (Klebsiella pneumoniae subsp. pneumoniae (strain ATCC 700721 / MGH 78578)).